The chain runs to 261 residues: MEMO1 family protein AF_2310 (261 aa).

This sequence belongs to the MEMO1 family.

The sequence is that of MEMO1 family protein AF_2310 from Archaeoglobus fulgidus (strain ATCC 49558 / DSM 4304 / JCM 9628 / NBRC 100126 / VC-16).